The chain runs to 504 residues: Syntaphilin (504 aa).

Positions 1-74 are disordered; sequence MAMSLQGSRR…HGIKPPTPEQ (74 aa). Composition is skewed to low complexity over residues 7–26 and 33–49; these read GSRR…VSVR and SLSS…SDSS. Residues 79–161 are a coiled coil; the sequence is LQQKEVCIRH…VKNNLIDKDK (83 aa). The disordered stretch occupies residues 191 to 244; the sequence is VAKEEGTGESAGGSPARSLTRSSTYTKLSDPAVCGDRQAGDPSNTPAEDRADSG. Phosphoserine occurs at positions 200 and 204. A compositionally biased stretch (polar residues) spans 207-217; sequence RSLTRSSTYTK. Phosphothreonine is present on threonine 214. Serine 219 is subject to Phosphoserine. A Phosphothreonine modification is found at threonine 235. Residues 437–456 form a helical membrane-spanning segment; the sequence is YIVDLLAVVVPAVPTVAWLC.

Binds to STX1A. Interacts with DNM1; this interaction inhibits the binding of DNM1 to AMPH and DNM1-receptor-mediated endocytosis.

It is found in the membrane. The protein resides in the synapse. It localises to the synaptosome. Its function is as follows. Inhibits SNARE complex formation by absorbing free STX1A. The sequence is that of Syntaphilin from Rattus norvegicus (Rat).